We begin with the raw amino-acid sequence, 382 residues long: Sulfate adenylyltransferase (382 aa).

The protein belongs to the sulfate adenylyltransferase family.

The catalysed reaction is sulfate + ATP + H(+) = adenosine 5'-phosphosulfate + diphosphate. It functions in the pathway sulfur metabolism; hydrogen sulfide biosynthesis; sulfite from sulfate: step 1/3. This Ignicoccus hospitalis (strain KIN4/I / DSM 18386 / JCM 14125) protein is Sulfate adenylyltransferase.